An 87-amino-acid polypeptide reads, in one-letter code: Mitotic-spindle organizing protein 1 (87 aa).

It belongs to the MOZART1 family. Part of the gamma-tubulin complex.

Its subcellular location is the cytoplasm. The protein resides in the cytoskeleton. It is found in the microtubule organizing center. The protein localises to the spindle pole body. In terms of biological role, required for gamma-tubulin complex recruitment to the microtubule organizing center (MTOC). The polypeptide is Mitotic-spindle organizing protein 1 (Chaetomium globosum (strain ATCC 6205 / CBS 148.51 / DSM 1962 / NBRC 6347 / NRRL 1970) (Soil fungus)).